We begin with the raw amino-acid sequence, 356 residues long: Dihydroorotate dehydrogenase (quinone) (356 aa).

Residues 67–71 (AGFDK) and Thr-91 contribute to the FMN site. Residue Lys-71 participates in substrate binding. Residue 116–120 (NRMGF) participates in substrate binding. FMN is bound by residues Asn-153 and Asn-186. Asn-186 provides a ligand contact to substrate. Ser-189 serves as the catalytic Nucleophile. Asn-191 lines the substrate pocket. Positions 228 and 256 each coordinate FMN. 257–258 (NT) provides a ligand contact to substrate. FMN contacts are provided by residues Gly-282, Gly-311, and 332–333 (YT).

The protein belongs to the dihydroorotate dehydrogenase family. Type 2 subfamily. Monomer. It depends on FMN as a cofactor.

It is found in the cell membrane. It catalyses the reaction (S)-dihydroorotate + a quinone = orotate + a quinol. It participates in pyrimidine metabolism; UMP biosynthesis via de novo pathway; orotate from (S)-dihydroorotate (quinone route): step 1/1. In terms of biological role, catalyzes the conversion of dihydroorotate to orotate with quinone as electron acceptor. In Pseudarthrobacter chlorophenolicus (strain ATCC 700700 / DSM 12829 / CIP 107037 / JCM 12360 / KCTC 9906 / NCIMB 13794 / A6) (Arthrobacter chlorophenolicus), this protein is Dihydroorotate dehydrogenase (quinone).